The following is a 353-amino-acid chain: Chorismate synthase (353 aa).

NADP(+)-binding residues include arginine 48 and arginine 54. Residues 125–127, 238–239, glycine 278, 293–297, and arginine 319 each bind FMN; these read RSS, NA, and KPTSS.

Belongs to the chorismate synthase family. As to quaternary structure, homotetramer. Requires FMNH2 as cofactor.

The enzyme catalyses 5-O-(1-carboxyvinyl)-3-phosphoshikimate = chorismate + phosphate. It functions in the pathway metabolic intermediate biosynthesis; chorismate biosynthesis; chorismate from D-erythrose 4-phosphate and phosphoenolpyruvate: step 7/7. Functionally, catalyzes the anti-1,4-elimination of the C-3 phosphate and the C-6 proR hydrogen from 5-enolpyruvylshikimate-3-phosphate (EPSP) to yield chorismate, which is the branch point compound that serves as the starting substrate for the three terminal pathways of aromatic amino acid biosynthesis. This reaction introduces a second double bond into the aromatic ring system. The protein is Chorismate synthase of Bordetella parapertussis (strain 12822 / ATCC BAA-587 / NCTC 13253).